The chain runs to 521 residues: Acidic amino acid decarboxylase GADL1 (521 aa).

Lys-333 is modified (N6-(pyridoxal phosphate)lysine).

The protein belongs to the group II decarboxylase family. As to quaternary structure, homodimer. Pyridoxal 5'-phosphate is required as a cofactor. Expressed very weakly in neurons and not detected in astrocytes, brain or liver.

It catalyses the reaction L-aspartate + H(+) = beta-alanine + CO2. The enzyme catalyses 3-sulfino-L-alanine + H(+) = hypotaurine + CO2. The catalysed reaction is L-cysteate + H(+) = taurine + CO2. May catalyze the decarboxylation of L-aspartate, 3-sulfino-L-alanine (cysteine sulfinic acid), and L-cysteate to beta-alanine, hypotaurine and taurine, respectively. Does not exhibit any decarboxylation activity toward glutamate. In Homo sapiens (Human), this protein is Acidic amino acid decarboxylase GADL1 (GADL1).